Reading from the N-terminus, the 460-residue chain is Bifunctional protein GlmU (460 aa).

The interval 1-232 is pyrophosphorylase; that stretch reads MAISAALILA…PDEIMGVNDR (232 aa). Residues 9–12, Lys23, Gln75, and 80–81 each bind UDP-N-acetyl-alpha-D-glucosamine; these read LAAG and GT. Asp105 is a Mg(2+) binding site. Gly142, Glu157, Asn172, and Asn230 together coordinate UDP-N-acetyl-alpha-D-glucosamine. A Mg(2+)-binding site is contributed by Asn230. The linker stretch occupies residues 233-253; that stretch reads VQLAHAARVLRQRVNLQLMLA. An N-acetyltransferase region spans residues 254–460; that stretch reads GVTLIDPDQT…GWCLKKRDNG (207 aa). UDP-N-acetyl-alpha-D-glucosamine is bound by residues Arg336 and Lys354. His366 functions as the Proton acceptor in the catalytic mechanism. Residues Tyr369 and Asn380 each contribute to the UDP-N-acetyl-alpha-D-glucosamine site. Residues 389–390, Ser408, Ala426, and Arg443 each bind acetyl-CoA; that span reads NY.

It in the N-terminal section; belongs to the N-acetylglucosamine-1-phosphate uridyltransferase family. This sequence in the C-terminal section; belongs to the transferase hexapeptide repeat family. As to quaternary structure, homotrimer. The cofactor is Mg(2+).

The protein resides in the cytoplasm. The enzyme catalyses alpha-D-glucosamine 1-phosphate + acetyl-CoA = N-acetyl-alpha-D-glucosamine 1-phosphate + CoA + H(+). It catalyses the reaction N-acetyl-alpha-D-glucosamine 1-phosphate + UTP + H(+) = UDP-N-acetyl-alpha-D-glucosamine + diphosphate. Its pathway is nucleotide-sugar biosynthesis; UDP-N-acetyl-alpha-D-glucosamine biosynthesis; N-acetyl-alpha-D-glucosamine 1-phosphate from alpha-D-glucosamine 6-phosphate (route II): step 2/2. It functions in the pathway nucleotide-sugar biosynthesis; UDP-N-acetyl-alpha-D-glucosamine biosynthesis; UDP-N-acetyl-alpha-D-glucosamine from N-acetyl-alpha-D-glucosamine 1-phosphate: step 1/1. The protein operates within bacterial outer membrane biogenesis; LPS lipid A biosynthesis. Its function is as follows. Catalyzes the last two sequential reactions in the de novo biosynthetic pathway for UDP-N-acetylglucosamine (UDP-GlcNAc). The C-terminal domain catalyzes the transfer of acetyl group from acetyl coenzyme A to glucosamine-1-phosphate (GlcN-1-P) to produce N-acetylglucosamine-1-phosphate (GlcNAc-1-P), which is converted into UDP-GlcNAc by the transfer of uridine 5-monophosphate (from uridine 5-triphosphate), a reaction catalyzed by the N-terminal domain. This Trichlorobacter lovleyi (strain ATCC BAA-1151 / DSM 17278 / SZ) (Geobacter lovleyi) protein is Bifunctional protein GlmU.